The chain runs to 397 residues: F-box protein At4g11590 (397 aa).

The F-box domain occupies 24–70 (EKNFNDVPLDVAIEIFMRLPVKSVARFLLLSKFWAEIIRSRHFITSF).

In terms of assembly, part of a SCF (ASK-cullin-F-box) protein ligase complex. Interacts with ASK16.

The protein localises to the nucleus. It participates in protein modification; protein ubiquitination. In terms of biological role, component of SCF(ASK-cullin-F-box) E3 ubiquitin ligase complexes, which may mediate the ubiquitination and subsequent proteasomal degradation of target proteins. This chain is F-box protein At4g11590, found in Arabidopsis thaliana (Mouse-ear cress).